A 258-amino-acid chain; its full sequence is Spindlin-2 (258 aa).

The disordered stretch occupies residues 1-47; it reads MKTPHKKATARQQTREIVDDHTLSASMRKKKISQKKQRGRPSSQTRR. The segment covering 13-22 has biased composition (basic and acidic residues); the sequence is QTREIVDDHT. A compositionally biased stretch (basic residues) spans 27-39; that stretch reads MRKKKISQKKQRG. Tudor-like domain regions lie at residues 50–99, 129–178, and 210–255; these read VGCR…LELH, IGKA…YQLL, and IGKH…YDLV. Histone H3K4me3 and H3R8me2a binding stretches follow at residues glutamate 138 and 246 to 248; that span reads DFH.

It belongs to the SPIN/STSY family. As to quaternary structure, interacts with C11orf84/SPINDOC.

The protein localises to the nucleus. In terms of biological role, may be involved in the regulation of cell cycle progression. Exhibits H3K4me3-binding activity. The polypeptide is Spindlin-2 (SPIN2) (Bos taurus (Bovine)).